The sequence spans 335 residues: DNA-directed RNA polymerase subunit alpha (335 aa).

The interval 1-233 (MTAVNDFLTP…QQIAVFVDLE (233 aa)) is alpha N-terminal domain (alpha-NTD). The alpha C-terminal domain (alpha-CTD) stretch occupies residues 247 to 335 (IDPILLRPVD…DDDRLNAKLR (89 aa)).

It belongs to the RNA polymerase alpha chain family. In terms of assembly, homodimer. The RNAP catalytic core consists of 2 alpha, 1 beta, 1 beta' and 1 omega subunit. When a sigma factor is associated with the core the holoenzyme is formed, which can initiate transcription.

It carries out the reaction RNA(n) + a ribonucleoside 5'-triphosphate = RNA(n+1) + diphosphate. Functionally, DNA-dependent RNA polymerase catalyzes the transcription of DNA into RNA using the four ribonucleoside triphosphates as substrates. This Alcanivorax borkumensis (strain ATCC 700651 / DSM 11573 / NCIMB 13689 / SK2) protein is DNA-directed RNA polymerase subunit alpha.